Consider the following 416-residue polypeptide: MGYDDRERDRERRRHRSRSRDRHRERSRDRRHHRNSRRKPSLYWDVPPPGFEHITPMQYKAMQASGQIPASVVPDTPQTAVPVVGSTITRQARRLYVGNIPFGVTEEEMMEFFNQQMHLVGLAQAAGSPVLACQINLDKNFAFLEFRSIDETTQAMAFDGINLKGQSLKIRRPHDYQPMPGITDTPAIKPAVVSSGVISTVVPDSPHKIFIGGLPNYLNDDQVKELLLSFGKLRAFNLVKDAATGLSKGYAFCEYVDLSITDQSIAGLNGMQLGDKKLIVQRASVGAKNAQNAANTTQSVMLQVPGLSNVVTSGPPTEVLCLLNMVTPDELRDEEEYEDILEDIKEECTKYGVVRSVEIPRPIEGVEVPGCGKVFVEFNSVLDCQKAQQALTGRKFSDRVVVTSYFDPDKYHRREF.

A compositionally biased stretch (basic and acidic residues) spans 1–10 (MGYDDRERDR). A disordered region spans residues 1 to 47 (MGYDDRERDRERRRHRSRSRDRHRERSRDRRHHRNSRRKPSLYWDVP). 2 stretches are compositionally biased toward basic residues: residues 11 to 21 (ERRRHRSRSRD) and 29 to 40 (DRRHHRNSRRKP). 3 consecutive RRM domains span residues 93-175 (RRLY…RPHD), 207-285 (HKIF…RASV), and 318-408 (EVLC…YFDP).

It belongs to the splicing factor SR family. As to quaternary structure, forms a heterodimer with the U2AF small subunit.

Its subcellular location is the nucleus. Necessary for the splicing of pre-mRNA. Binds to the polypyrimidine tract of introns early during spliceosome assembly. This is Splicing factor U2AF 50 kDa subunit (U2af50) from Drosophila melanogaster (Fruit fly).